Reading from the N-terminus, the 359-residue chain is MAAVSGLVRRPLREVSRLLKRRFHWTAPAALQVTVRDAINQGMDEELERDEKVFLLGEEVAQYDGAYKVSRGLWKKYGDKRIIDTPISEMGFAGIAVGAAMAGLRPICEFMTFNFSMQAIDQVINSAAKTYYMSGGLQPVPIVFRGPNGASAGVAAQHSQCFAAWYGHCPGLKVVSPWNSEDAKGLIKSAIRDNNPVVVLENELMYGVPFEFPPEAQSKDFLIPIGKAKIERQGTHITVVSHSRPVGHCLEAAAVLSKEGVECEVINMRTIRPMDMETIEASVMKTNHLVTVEGGWPQFGVGAEICARIMEGPAFNFLDAPAVRVTGADVPMPYAKILEDNSIPQVKDIIFAIKKTLNI.

The N-terminal 30 residues, 1–30 (MAAVSGLVRRPLREVSRLLKRRFHWTAPAA), are a transit peptide targeting the mitochondrion. Phosphotyrosine is present on tyrosine 67. Position 89 (glutamate 89) interacts with thiamine diphosphate. 5 residues coordinate K(+): isoleucine 142, alanine 190, isoleucine 191, aspartate 193, and asparagine 195. Lysine 354 bears the N6-acetyllysine mark.

Heterotetramer of two PDHA1 and two PDHB subunits. The heterotetramer interacts with DLAT, and is part of the multimeric pyruvate dehydrogenase complex that contains multiple copies of pyruvate dehydrogenase (E1), dihydrolipoamide acetyltransferase (DLAT, E2) and lipoamide dehydrogenase (DLD, E3). These subunits are bound to an inner core composed of about 48 DLAT and 12 PDHX molecules. Interacts with DLAT. Thiamine diphosphate is required as a cofactor.

The protein localises to the mitochondrion matrix. It carries out the reaction N(6)-[(R)-lipoyl]-L-lysyl-[protein] + pyruvate + H(+) = N(6)-[(R)-S(8)-acetyldihydrolipoyl]-L-lysyl-[protein] + CO2. The pyruvate dehydrogenase complex catalyzes the overall conversion of pyruvate to acetyl-CoA and CO(2), and thereby links the glycolytic pathway to the tricarboxylic cycle. The chain is Pyruvate dehydrogenase E1 component subunit beta, mitochondrial (PDHB) from Pongo abelii (Sumatran orangutan).